Here is a 608-residue protein sequence, read N- to C-terminus: Chaperone protein HtpG (608 aa).

Residues 1–332 form an a; substrate-binding region; sequence MQFQTEVNQL…VEDLPLNVSR (332 aa). The b stretch occupies residues 333-536; that stretch reads EILQENQILK…KNKPDFAMQQ (204 aa). The interval 537-608 is c; that stretch reads LLKQMGQEQN…LTKIINKAFS (72 aa).

The protein belongs to the heat shock protein 90 family. As to quaternary structure, homodimer.

The protein resides in the cytoplasm. Molecular chaperone. Has ATPase activity. The chain is Chaperone protein HtpG from Campylobacter jejuni subsp. jejuni serotype O:6 (strain 81116 / NCTC 11828).